A 2549-amino-acid chain; its full sequence is MLGTGPAAATTAATTSSNVSVLQQFASGLKSRNEETRAKAAKELQHYVTMELREMSQEESTRFYDQLNHHIFELVSSSDANERKGGILAIASLIGVEGGNATRIGRFANYLRNLLPSNDPVVMEMASKAIGRLAMAGDTFTAEYVEFEVKRALEWLGADRNEGRRHAAVLVLRELAISVPTFFFQQVQPFFDNIFVAVWDPKQAIREGAVAALRACLILTTQREPKEMQKPQWYRHTFEEAEKGFDETLAKEKGMNRDDRIHGALLILNELVRISSMEGERLREEMEEITQQQLVHDKYCKDLMGFGTKPRHITPFTSFQAVQPQQSNALVGLLGYSSHQGLMGFGTSPSPAKSTLVESRCCRDLMEEKFDQVCQWVLKCRNSKNSLIQMTILNLLPRLAAFRPSAFTDTQYLQDTMNHVLSCVKKEKERTAAFQALGLLSVAVRSEFKVYLPRVLDIIRAALPPKDFAHKRQKAMQVDATVFTCISMLARAMGPGIQQDIKELLEPMLAVGLSPALTAVLYDLSRQIPQLKKDIQDGLLKMLSLVLMHKPLRHPGMPKGLAHQLASPGLTTLPEASDVGSITLALRTLGSFEFEGHSLTQFVRHCADHFLNSEHKEIRMEAARTCSRLLTPSIHLISGHAHVVSQTAVQVVADVLSKLLVVGITDPDPDIRYCVLASLDERFDAHLAQAENLQALFVALNDQVFEIRELAICTVGRLSSMNPAFVMPFLRKMLIQILTELEHSGIGRIKEQSARMLGHLVSNAPRLIRPYMEPILKALILKLKDPDPDPNPGVINNVLATIGELAQVSGLEMRKWVDELFIIIMDMLQDSSLLAKRQVALWTLGQLVASTGYVVEPYRKYPTLLEVLLNFLKTEQNQGTRREAIRVLGLLGALDPYKHKVNIGMIDQSRDASAVSLSESKSSQDSSDYSTSEMLVNMGNLPLDEFYPAVSMVALMRIFRDQSLSHHHTMVVQAITFIFKSLGLKCVQFLPQVMPTFLNVIRVCDGAIREFLFQQLGMLVSFVKSHIRPYMDEIVTLMREFWVMNTSIQSTIILLIEQIVVALGGEFKLYLPQLIPHMLRVFMHDNSPGRIVSIKLLAAIQLFGANLDDYLHLLLPPIVKLFDAPEAPLPSRKAALETVDRLTESLDFTDYASRIIHPIVRTLDQSPELRSTAMDTLSSLVFQLGKKYQIFIPMVNKVLVRHRINHQRYDVLICRIVKGYTLADEEEDPLIYQHRMLRSGQGDALASGPVETGPMKKLHVSTINLQKAWGAARRVSKDDWLEWLRRLSLELLKDSSSPSLRSCWALAQAYNPMARDLFNAAFVSCWSELNEDQQDELIRSIELALTSQDIAEVTQTLLNLAEFMEHSDKGPLPLRDDNGIVLLGERAAKCRAYAKALHYKELEFQKGPTPAILESLISINNKLQQPEAAAGVLEYAMKHFGELEIQATWYEKLHEWEDALVAYDKKMDTNKDDPELMLGRMRCLEALGEWGQLHQQCCEKWTLVNDETQAKMARMAAAAAWGLGQWDSMEEYTCMIPRDTHDGAFYRAVLALHQDLFSLAQQCIDKARDLLDAELTAMAGESYSRAYGAMVSCHMLSELEEVIQYKLVPERREIIRQIWWERLQGCQRIVEDWQKILMVRSLVVSPHEDMRTWLKYASLCGKSGRLALAHKTLVLLLGVDPSRQLDHPLPTVHPQVTYAYMKNMWKSARKIDAFQHMQHFVQTMQQQAQHAIATEDQQHKQELHKLMARCFLKLGEWQLNLQGINESTIPKVLQYYSAATEHDRSWYKAWHAWAVMNFEAVLHYKHQNQARDEKKKLRHASGANITNATTAATTAATATTTASTEGSNSESEAESTENSPTPSPLQKKVTEDLSKTLLMYTVPAVQGFFRSISLSRGNNLQDTLRVLTLWFDYGHWPDVNEALVEGVKAIQIDTWLQVIPQLIARIDTPRPLVGRLIHQLLTDIGRYHPQALIYPLTVASKSTTTARHNAANKILKNMCEHSNTLVQQAMMVSEELIRVAILWHEMWHEGLEEASRLYFGERNVKGMFEVLEPLHAMMERGPQTLKETSFNQAYGRDLMEAQEWCRKYMKSGNVKDLTQAWDLYYHVFRRISKQLPQLTSLELQYVSPKLLMCRDLELAVPGTYDPNQPIIRIQSIAPSLQVITSKQRPRKLTLMGSNGHEFVFLLKGHEDLRQDERVMQLFGLVNTLLANDPTSLRKNLSIQRYAVIPLSTNSGLIGWVPHCDTLHALIRDYREKKKILLNIEHRIMLRMAPDYDHLTLMQKVEVFEHAVNNTAGDDLAKLLWLKSPSSEVWFDRRTNYTRSLAVMSMVGYILGLGDRHPSNLMLDRLSGKILHIDFGDCFEVAMTREKFPEKIPFRLTRMLTNAMEVTGLDGNYRITCHTVMEVLREHKDSVMAVLEAFVYDPLLNWRLMDTNTKGNKRSRTRTDSYSAGQSVEILDGVELGEPAHKKTGTTVPESIHSFIGDGLVKPEALNKKAIQIINRVRDKLTGRDFSHDDTLDVPTQVELLIKQATSHENLCQCYIGWCPFW.

Methionine 1 carries the N-acetylmethionine modification. Residues 1 to 651 (MLGTGPAAAT…HVVSQTAVQV (651 aa)) are interaction with NBN. 32 HEAT repeats span residues 16-53 (SSNV…MELR), 55-99 (MSQE…VEGG), 100-137 (NATR…AMAG), 138-179 (DTFT…AISV), 180-220 (PTFF…LILT), 222-276 (QREP…RISS), 277-313 (MEGE…PRHI), 314-364 (TPFT…CCRD), 365-409 (LMEE…AFTD), 410-445 (TQYL…VAVR), 446-494 (SEFK…RAMG), 495-529 (PGIQ…RQIP), 530-563 (QLKK…GLAH), 564-596 (QLAS…EFEG), 597-636 (HSLT…SIHL), 637-683 (ISGH…DERF), 686-724 (HLAQ…MNPA), 727-766 (MPFL…NAPR), 769-811 (RPYM…VSGL), 814-853 (RKWV…STGY), 857-893 (PYRK…LLGA), 894-942 (LDPY…GNLP), 943-988 (LDEF…KCVQ), 989-1027 (FLPQ…KSHI), 1029-1068 (PYMD…GEFK), 1069-1105 (LYLP…LFGA), 1106-1144 (NLDD…RLTE), 1145-1188 (SLDF…GKKY), 1189-1225 (QIFI…LADE), 1226-1273 (EEDP…GAAR), 1274-1311 (RVSK…QAYN), and 1312-1345 (PMAR…ELAL). Phosphoserine is present on serine 567. Threonine 1162 is subject to Phosphothreonine. Residue lysine 1218 is modified to N6-acetyllysine. Phosphoserine is present on serine 1261. 16 TPR repeats span residues 1346 to 1382 (TSQD…GIVL), 1383 to 1408 (LGER…QKGP), 1409 to 1442 (TPAI…HFGE), 1443 to 1473 (LEIQ…NKDD), 1474 to 1507 (PELM…VNDE), 1508 to 1541 (TQAK…RDTH), 1542 to 1574 (DGAF…LDAE), 1575 to 1614 (LTAM…RREI), 1615 to 1649 (IRQI…PHED), 1650 to 1693 (MRTW…PTVH), 1694 to 1731 (PQVT…AQHA), 1732 to 1786 (IATE…DRSW), 1787 to 1846 (YKAW…STEG), 1898 to 1930 (NNLQ…VKAI), 1931 to 1970 (QIDT…YHPQ), and 1971 to 2005 (ALIY…SNTL). Positions 1382–1982 (LLGERAAKCR…IYPLTVASKS (601 aa)) constitute an FAT domain. Residues lysine 1662, lysine 1702, and arginine 1749 each contribute to the 1D-myo-inositol hexakisphosphate site. The interval 1812–1867 (DEKKKLRHASGANITNATTAATTAATATTTASTEGSNSESEAESTENSPTPSPLQK) is disordered. Residues 1820-1860 (ASGANITNATTAATTAATATTTASTEGSNSESEAESTENSP) are compositionally biased toward low complexity. The interval 2012-2144 (VSEELIRVAI…DLELAVPGTY (133 aa)) is sufficient for interaction with the FKBP1A/rapamycin complex. Lysine 2066 is covalently cross-linked (Glycyl lysine isopeptide (Lys-Gly) (interchain with G-Cter in ubiquitin)). Positions 2156–2469 (IAPSLQVITS…GVELGEPAHK (314 aa)) constitute a PI3K/PI4K catalytic domain. Serine 2159 bears the Phosphoserine; by TBK1 mark. The interval 2162–2168 (VITSKQR) is G-loop. Residue threonine 2164 is modified to Phosphothreonine. ATP contacts are provided by serine 2165 and glutamine 2167. Threonine 2173 carries the phosphothreonine; by PKB/AKT1 modification. Leucine 2185, lysine 2187, glutamate 2190, tyrosine 2225, glycine 2238, tryptophan 2239, valine 2240, and threonine 2245 together coordinate ATP. The interval 2258-2296 (KILLNIEHRIMLRMAPDYDHLTLMQKVEVFEHAVNNTAG) is interaction with MLST8. A catalytic loop region spans residues 2335 to 2343 (GLGDRHPSN). Asparagine 2343 contributes to the Mg(2+) binding site. ATP-binding residues include methionine 2345 and isoleucine 2356. The tract at residues 2355-2380 (HIDFGDCFEVAMTREKFPEKIPFRLT) is activation loop. Mg(2+) is bound at residue aspartate 2357. Threonine 2446 is subject to Phosphothreonine; by RPS6KB1. At serine 2448 the chain carries Phosphoserine; by RPS6KB1. A Phosphoserine modification is found at serine 2478. Residue serine 2481 is modified to Phosphoserine; by autocatalysis. An FATC domain is found at 2517 to 2549 (DTLDVPTQVELLIKQATSHENLCQCYIGWCPFW).

Belongs to the PI3/PI4-kinase family. Part of the mechanistic target of rapamycin complex 1 (mTORC1) which contains MTOR, MLST8 and RPTOR. The mTORC1 complex is a 1 Md obligate dimer of two stoichiometric heterotetramers with overall dimensions of 290 A x 210 A x 135 A. It has a rhomboid shape and a central cavity, the dimeric interfaces are formed by interlocking interactions between the two MTOR and the two RPTOR subunits. The MLST8 subunit forms distal foot-like protuberances, and contacts only one MTOR within the complex, while the small AKT1S1/PRAS40 localizes to the midsection of the central core, in close proximity to RPTOR. mTORC1 associates with AKT1S1/PRAS40, which inhibits its activity by blocking MTOR substrate-recruitment site. Component of the mechanistic target of rapamycin complex 2 (mTORC2), consisting in two heterotretramers composed of MTOR, MLST8, RICTOR and MAPKAP1/SIN1. Interacts with PLPP7 and PML. Interacts with PRR5 and RICTOR; the interaction is direct within the mTORC2 complex and interaction with RICTOR is enhanced by deubiquitination of RICTOR by USP9X. mTORC1 and mTORC2 associate with DEPTOR, which regulates their activity. Interacts with WAC; WAC positively regulates MTOR activity by promoting the assembly of the TTT complex composed of TELO2, TTI1 and TTI2 and the RUVBL complex composed of RUVBL1 and RUVBL2 into the TTT-RUVBL complex which leads to the dimerization of the mTORC1 complex and its subsequent activation. Interacts with UBQLN1. Interacts with TTI1 and TELO2. Interacts with CLIP1; phosphorylates and regulates CLIP1. Interacts with NBN. Interacts with HTR6. Interacts with BRAT1. Interacts with MEAK7 (via C-terminal domain); the interaction increases upon nutrient stimulation. Interacts with TM4SF5; the interaction is positively regulated by arginine and is negatively regulated by leucine. Interacts with GPR137B. Interacts with NCKAP1L. Interacts with TPCN1 and TPCN2; the interaction is required for TPCN1 and TPCN2 sensitivity to ATP. Interacts with ATP6V1A and with CRYAB, forming a ternary complex. Interacts with SLC38A7; this interaction mediates the recruitment of mTORC1 to the lysosome and its subsequent activation. Interacts with TSPAN8. Autophosphorylates when part of mTORC1 or mTORC2. Phosphorylation at Ser-1261, Ser-2159 and Thr-2164 promotes autophosphorylation. Phosphorylated at Ser-2448 by RPS6KB1. Phosphorylation in the kinase domain modulates the interactions of MTOR with RPTOR and AKT1S1/PRAS40 and leads to increased intrinsic mTORC1 kinase activity. Phosphorylation at Ser-2159 by TBK1 in response to growth factors and pathogen recognition receptors promotes mTORC1 activity. Phosphorylation at Ser-2159 by TBK1 in response to EGF growth factor promotes mTORC2 activity, leading to AKT1 phosphorylation and activation. Phosphorylation at Thr-2173 in the ATP-binding region by AKT1 strongly reduces kinase activity. In terms of processing, ubiquitinated at Lys-2066 by the SCF(FBXO22) complex via 'Lys-27'-linked ubiquitination prevents mTORC1 substrate recruitment. In terms of tissue distribution, expressed in numerous tissues, with highest levels in testis.

The protein resides in the lysosome membrane. It is found in the endoplasmic reticulum membrane. It localises to the golgi apparatus membrane. Its subcellular location is the cell membrane. The protein localises to the mitochondrion outer membrane. The protein resides in the cytoplasm. It is found in the nucleus. It localises to the PML body. Its subcellular location is the microsome membrane. The protein localises to the cytoplasmic vesicle. The protein resides in the phagosome. It carries out the reaction L-seryl-[protein] + ATP = O-phospho-L-seryl-[protein] + ADP + H(+). The enzyme catalyses L-threonyl-[protein] + ATP = O-phospho-L-threonyl-[protein] + ADP + H(+). The catalysed reaction is L-tyrosyl-[protein] + ATP = O-phospho-L-tyrosyl-[protein] + ADP + H(+). The mTORC1 complex is activated in response to nutrients, growth factors or amino acids: activation requires relocalization of the mTORC1 complex to lysosomes that is mediated by the Ragulator complex, SLC38A9, and the Rag GTPases RagA/RRAGA, RagB/RRAGB, RagC/RRAGC and RagD/RRAGD. Activation of mTORC1 by growth factors such as insulin involves AKT1-mediated phosphorylation of TSC1-TSC2, which leads to the activation of the RHEB GTPase a potent activator of the protein kinase activity of mTORC1. Insulin-stimulated and amino acid-dependent phosphorylation at Ser-1261 promotes autophosphorylation and the activation of mTORC1. On the other hand, low cellular energy levels can inhibit mTORC1 through activation of PRKAA1 while hypoxia inhibits mTORC1 through a REDD1-dependent mechanism which may also require PRKAA1. The kinase activity of MTOR within the mTORC1 complex is positively regulated by MLST8. The kinase activity of MTOR is inhibited by DEPTOR and AKT1S1. The non-canonical mTORC1 complex is independent of the RHEB GTPase and specifically mediates phosphorylation of MiT/TFE factors TFEB and TFE3 but not other mTORC1 substrates: it is activated by FLCN, which activates Rag GTPases RagC/RRAGC and RagD/RRAGD. MTOR is the target of the immunosuppressive and anti-cancer drug rapamycin which acts in complex with FKBP1A/FKBP12, and specifically inhibits its kinase activity. mTORC2 is also activated by growth factors, but seems to be nutrient-insensitive. mTORC2 associates and is directly activated by ribosomes. mTORC2 may also be regulated by RHEB but in an indirect manner through the PI3K signaling pathway. In terms of biological role, serine/threonine protein kinase which is a central regulator of cellular metabolism, growth and survival in response to hormones, growth factors, nutrients, energy and stress signals. MTOR directly or indirectly regulates the phosphorylation of at least 800 proteins. Functions as part of 2 structurally and functionally distinct signaling complexes mTORC1 and mTORC2 (mTOR complex 1 and 2). In response to nutrients, growth factors or amino acids, mTORC1 is recruited to the lysosome membrane and promotes protein, lipid and nucleotide synthesis by phosphorylating key regulators of mRNA translation and ribosome synthesis. This includes phosphorylation of EIF4EBP1 and release of its inhibition toward the elongation initiation factor 4E (eiF4E). Moreover, phosphorylates and activates RPS6KB1 and RPS6KB2 that promote protein synthesis by modulating the activity of their downstream targets including ribosomal protein S6, eukaryotic translation initiation factor EIF4B, and the inhibitor of translation initiation PDCD4. Stimulates the pyrimidine biosynthesis pathway, both by acute regulation through RPS6KB1-mediated phosphorylation of the biosynthetic enzyme CAD, and delayed regulation, through transcriptional enhancement of the pentose phosphate pathway which produces 5-phosphoribosyl-1-pyrophosphate (PRPP), an allosteric activator of CAD at a later step in synthesis, this function is dependent on the mTORC1 complex. Regulates ribosome synthesis by activating RNA polymerase III-dependent transcription through phosphorylation and inhibition of MAF1 an RNA polymerase III-repressor. Activates dormant ribosomes by mediating phosphorylation of SERBP1, leading to SERBP1 inactivation and reactivation of translation. In parallel to protein synthesis, also regulates lipid synthesis through SREBF1/SREBP1 and LPIN1. To maintain energy homeostasis mTORC1 may also regulate mitochondrial biogenesis through regulation of PPARGC1A. In the same time, mTORC1 inhibits catabolic pathways: negatively regulates autophagy through phosphorylation of ULK1. Under nutrient sufficiency, phosphorylates ULK1 at 'Ser-758', disrupting the interaction with AMPK and preventing activation of ULK1. Also prevents autophagy through phosphorylation of the autophagy inhibitor DAP. Also prevents autophagy by phosphorylating RUBCNL/Pacer under nutrient-rich conditions. Prevents autophagy by mediating phosphorylation of AMBRA1, thereby inhibiting AMBRA1 ability to mediate ubiquitination of ULK1 and interaction between AMBRA1 and PPP2CA. mTORC1 exerts a feedback control on upstream growth factor signaling that includes phosphorylation and activation of GRB10 a INSR-dependent signaling suppressor. Among other potential targets mTORC1 may phosphorylate CLIP1 and regulate microtubules. The mTORC1 complex is inhibited in response to starvation and amino acid depletion. The non-canonical mTORC1 complex, which acts independently of RHEB, specifically mediates phosphorylation of MiT/TFE factors MITF, TFEB and TFE3 in the presence of nutrients, promoting their cytosolic retention and inactivation. Upon starvation or lysosomal stress, inhibition of mTORC1 induces dephosphorylation and nuclear translocation of TFEB and TFE3, promoting their transcription factor activity. The mTORC1 complex regulates pyroptosis in macrophages by promoting GSDMD oligomerization. MTOR phosphorylates RPTOR which in turn inhibits mTORC1. As part of the mTORC2 complex, MTOR transduces signals from growth factors to pathways involved in proliferation, cytoskeletal organization, lipogenesis and anabolic output. In response to growth factors, mTORC2 phosphorylates and activates AGC protein kinase family members, including AKT (AKT1, AKT2 and AKT3), PKC (PRKCA, PRKCB and PRKCE) and SGK1. In contrast to mTORC1, mTORC2 is nutrient-insensitive. mTORC2 plays a critical role in AKT1 activation by mediating phosphorylation of different sites depending on the context, such as 'Thr-450', 'Ser-473', 'Ser-477' or 'Thr-479', facilitating the phosphorylation of the activation loop of AKT1 on 'Thr-308' by PDPK1/PDK1 which is a prerequisite for full activation. mTORC2 also regulates the phosphorylation of SGK1 at 'Ser-422'. mTORC2 may regulate the actin cytoskeleton, through phosphorylation of PRKCA, PXN and activation of the Rho-type guanine nucleotide exchange factors RHOA and RAC1A or RAC1B. The mTORC2 complex also phosphorylates various proteins involved in insulin signaling, such as FBXW8 and IGF2BP1. May also regulate insulin signaling by acting as a tyrosine protein kinase that catalyzes phosphorylation of IGF1R and INSR; additional evidence are however required to confirm this result in vivo. Regulates osteoclastogenesis by adjusting the expression of CEBPB isoforms. Plays an important regulatory role in the circadian clock function; regulates period length and rhythm amplitude of the suprachiasmatic nucleus (SCN) and liver clocks. This is Serine/threonine-protein kinase mTOR from Homo sapiens (Human).